The following is a 409-amino-acid chain: MSRQKFERIKPHINIGTIGHVDHGKTTLTAAITMALSVTGNTKSKKYEEIDSSPEEKARGITINTAHVEYETKNRHYAHVDCPGHADYIKNMITGAAQMDGAILVISATDGPMPQTKEHILLAKQVGVPNLVVFLNKEDQIDDNELLELIELEIRETLNNYEFPGDEIPIITGSALLAIEALNKNPKIIKGENKWVDKILDLMDKIDSYIPTPIRDTDKDFLLAIEDVLSITGRGTVATGRIERGKIKVGETVELIGLKNIKSTTITGLEMFQKSLDEAIAGDNVGVLLRGIQKNEVERGMVIAKPGTIQPHIKFNSQVYILTKEEGGRHTPFFEGYKPQFYVRTTDVTGKIESFKSDDGTTVQMVMPGDKIKMIVELVQPIAIEKGMRFAIREGGKTVGAGVIINIID.

Positions 10 to 214 (KPHINIGTIG…KIDSYIPTPI (205 aa)) constitute a tr-type G domain. The segment at 19-26 (GHVDHGKT) is G1. GTP is bound at residue 19–26 (GHVDHGKT). Mg(2+) is bound at residue Thr26. The interval 60-64 (GITIN) is G2. Positions 81-84 (DCPG) are G3. GTP contacts are provided by residues 81 to 85 (DCPGH) and 136 to 139 (NKED). The G4 stretch occupies residues 136–139 (NKED). The tract at residues 174–176 (SAL) is G5.

This sequence belongs to the TRAFAC class translation factor GTPase superfamily. Classic translation factor GTPase family. EF-Tu/EF-1A subfamily.

Its subcellular location is the plastid. It catalyses the reaction GTP + H2O = GDP + phosphate + H(+). Its function is as follows. GTP hydrolase that promotes the GTP-dependent binding of aminoacyl-tRNA to the A-site of ribosomes during protein biosynthesis. The protein is Elongation factor Tu, plastid (tufA) of Euglena longa (Euglenophycean alga).